Here is a 418-residue protein sequence, read N- to C-terminus: MFSREMNIADFDPELANAMANEVERQEHHIELIASENYCSPRVMEAQGSQLTNKYAEGYPGKRYYGGCEHVDVVEQLAIDRAKELFGADYANVQPHAGSQANSAVFMALLDAGDTVLGMSLSEGGHLTHGSHVNFSGKTYNAVQYGLDKETGEIDYAQVEALAKEHKPKMIIGGFSAYSGIVDWAKFREIADSVGAYLLVDMAHVAGLVAAGVYPNPLPHAHVVTTTTHKTLAGPRSGLILSSCGDEAIYKKLNSSVFPGNQGGPLCHVIAAKAVAFKEALQPEFKAYQQQVVANAKAMVSVMQERGYNIVSGGTDNHLFLLDLIDKDITGKDADAALGAANITVNKNSVPNDPRSPFVTSGLRIGSPAITRRGFKEEQAKQVATWICDILDNMGDESVIKRVQSEVVALCAQFPVYK.

Residues Leu121 and 125–127 (GHL) each bind (6S)-5,6,7,8-tetrahydrofolate. Lys230 is subject to N6-(pyridoxal phosphate)lysine. Residue 356–358 (SPF) coordinates (6S)-5,6,7,8-tetrahydrofolate.

Belongs to the SHMT family. As to quaternary structure, homodimer. Pyridoxal 5'-phosphate is required as a cofactor.

The protein resides in the cytoplasm. It carries out the reaction (6R)-5,10-methylene-5,6,7,8-tetrahydrofolate + glycine + H2O = (6S)-5,6,7,8-tetrahydrofolate + L-serine. Its pathway is one-carbon metabolism; tetrahydrofolate interconversion. It participates in amino-acid biosynthesis; glycine biosynthesis; glycine from L-serine: step 1/1. Its function is as follows. Catalyzes the reversible interconversion of serine and glycine with tetrahydrofolate (THF) serving as the one-carbon carrier. This reaction serves as the major source of one-carbon groups required for the biosynthesis of purines, thymidylate, methionine, and other important biomolecules. Also exhibits THF-independent aldolase activity toward beta-hydroxyamino acids, producing glycine and aldehydes, via a retro-aldol mechanism. The polypeptide is Serine hydroxymethyltransferase (Alteromonas mediterranea (strain DSM 17117 / CIP 110805 / LMG 28347 / Deep ecotype)).